The sequence spans 209 residues: MSERGLLIVFSGPSGVGKGTVRQEIFSTPDHKFDYSVSMTTRPQRPGEVDGVDYFFRTREEFEALIKEGQMLEYAEYVGNYYGTPLSYVNETLDKGIDVFLEIEVQGALQVKSKVPDGVFIFLTPPDLEELEERLVGRGTDSPEVIAQRIERAKEEIALMREYDYAVVNDQVSLAAERVKRVIEAEHYRVDRVIGRYTNMVKETDKKLS.

The Guanylate kinase-like domain maps to 5 to 184 (GLLIVFSGPS…AAERVKRVIE (180 aa)). Position 12–19 (12–19 (GPSGVGKG)) interacts with ATP.

Belongs to the guanylate kinase family.

Its subcellular location is the cytoplasm. The enzyme catalyses GMP + ATP = GDP + ADP. Essential for recycling GMP and indirectly, cGMP. The protein is Guanylate kinase of Streptococcus agalactiae serotype Ia (strain ATCC 27591 / A909 / CDC SS700).